A 255-amino-acid chain; its full sequence is uncharacterized protein (255 aa).

It belongs to the methyltransferase superfamily.

This is an uncharacterized protein from Mycolicibacterium gilvum (strain PYR-GCK) (Mycobacterium gilvum (strain PYR-GCK)).